The primary structure comprises 132 residues: Small ribosomal subunit protein uS8 (132 aa).

This sequence belongs to the universal ribosomal protein uS8 family. In terms of assembly, part of the 30S ribosomal subunit. Contacts proteins S5 and S12.

Functionally, one of the primary rRNA binding proteins, it binds directly to 16S rRNA central domain where it helps coordinate assembly of the platform of the 30S subunit. The polypeptide is Small ribosomal subunit protein uS8 (Kineococcus radiotolerans (strain ATCC BAA-149 / DSM 14245 / SRS30216)).